The sequence spans 239 residues: Small ribosomal subunit protein eS6B (239 aa).

Phosphoserine is present on residues S148, S235, and S236.

Belongs to the eukaryotic ribosomal protein eS6 family. In terms of assembly, component of the small ribosomal subunit (SSU). Mature yeast ribosomes consist of a small (40S) and a large (60S) subunit. The 40S small subunit contains 1 molecule of ribosomal RNA (18S rRNA) and at least 33 different proteins. The large 60S subunit contains 3 rRNA molecules (25S, 5.8S and 5S rRNA) and at least 46 different proteins. Interacts with snoRNA U3. uS11 interacts with MPP10. Component of the ribosomal small subunit (SSU) processome composed of at least 40 protein subunits and snoRNA U3.

It is found in the cytoplasm. Component of the ribosome, a large ribonucleoprotein complex responsible for the synthesis of proteins in the cell. The small ribosomal subunit (SSU) binds messenger RNAs (mRNAs) and translates the encoded message by selecting cognate aminoacyl-transfer RNA (tRNA) molecules. The large subunit (LSU) contains the ribosomal catalytic site termed the peptidyl transferase center (PTC), which catalyzes the formation of peptide bonds, thereby polymerizing the amino acids delivered by tRNAs into a polypeptide chain. The nascent polypeptides leave the ribosome through a tunnel in the LSU and interact with protein factors that function in enzymatic processing, targeting, and the membrane insertion of nascent chains at the exit of the ribosomal tunnel. eS6 is involved in nucleolar processing of pre-18S ribosomal RNA and ribosome assembly. This is Small ribosomal subunit protein eS6B (rps602) from Schizosaccharomyces pombe (strain 972 / ATCC 24843) (Fission yeast).